We begin with the raw amino-acid sequence, 285 residues long: uncharacterized protein (285 aa).

Positions histidine 184–arginine 282 constitute an HTH araC/xylS-type domain. DNA-binding regions (H-T-H motif) lie at residues glutamate 201–glycine 222 and isoleucine 249–phenylalanine 272.

This is an uncharacterized protein from Escherichia coli (strain K12).